Reading from the N-terminus, the 274-residue chain is Transcription factor MYB58 (274 aa).

HTH myb-type domains lie at 11–63 and 64–118; these read KTKV…INYL and RPDV…KKRL. 2 consecutive DNA-binding regions (H-T-H motif) follow at residues 39–63 and 91–114; these read WRSL…INYL and WSKI…HTHL. Disordered stretches follow at residues 121–160 and 237–274; these read ETNL…ISSK and SELG…LLIH. Positions 263-274 are enriched in low complexity; the sequence is SSLLESYELLIH.

As to expression, expressed in leaves. Specifically expressed in fibers and vessels undergoing secondary wall thickening, especially in inflorescence stems.

It is found in the nucleus. Functionally, transcriptional activator that binds DNA to the AC cis-elements 5'-ACCTACC-3', 5'-ACCAACC-3' and 5'-ACCTAAC-3' of promoters and specifically activates lignin biosynthetic genes during secondary wall formation mediated by SND1. The chain is Transcription factor MYB58 from Arabidopsis thaliana (Mouse-ear cress).